Here is a 179-residue protein sequence, read N- to C-terminus: MKLILDFFPILLFFGAYKLADIYTATGVLMAATVLQMGIIYAMERKLQAMQKATLVLILLFGTLTLVLHDDRFIKWKPTVLYGAMAIALAVALWALKKNFLKMLLGSQLQLPDRIWGRLNVAWIGYCLFMAAINGYVAAYFTTEAWVNFKLWGYVFPIVFLVAQGLYISPHLKNDEPSV.

5 helical membrane-spanning segments follow: residues Thr-24–Glu-44, Ala-49–His-69, Trp-76–Leu-96, Val-121–Phe-141, and Leu-151–His-171.

Belongs to the YciB family.

Its subcellular location is the cell inner membrane. Functionally, plays a role in cell envelope biogenesis, maintenance of cell envelope integrity and membrane homeostasis. This chain is Inner membrane-spanning protein YciB, found in Variovorax paradoxus (strain S110).